Consider the following 165-residue polypeptide: Small ribosomal subunit protein uS5 (165 aa).

One can recognise an S5 DRBM domain in the interval leucine 10 to valine 73.

It belongs to the universal ribosomal protein uS5 family. Part of the 30S ribosomal subunit. Contacts proteins S4 and S8.

With S4 and S12 plays an important role in translational accuracy. Its function is as follows. Located at the back of the 30S subunit body where it stabilizes the conformation of the head with respect to the body. The sequence is that of Small ribosomal subunit protein uS5 from Acinetobacter baumannii (strain AB307-0294).